Consider the following 135-residue polypeptide: Large ribosomal subunit protein uL18c (135 aa).

This sequence belongs to the universal ribosomal protein uL18 family. Part of the 50S ribosomal subunit; contacts the 5S rRNA.

The protein resides in the plastid. It localises to the chloroplast. Its function is as follows. Binds 5S rRNA, forms part of the central protuberance of the 50S subunit. The protein is Large ribosomal subunit protein uL18c (rpl18) of Phaeodactylum tricornutum (strain CCAP 1055/1).